A 224-amino-acid chain; its full sequence is Thymidylate kinase (224 aa).

7–14 (GIEGSGKS) serves as a coordination point for ATP.

This sequence belongs to the thymidylate kinase family.

It carries out the reaction dTMP + ATP = dTDP + ADP. Its function is as follows. Phosphorylation of dTMP to form dTDP in both de novo and salvage pathways of dTTP synthesis. The polypeptide is Thymidylate kinase (Nitratidesulfovibrio vulgaris (strain DP4) (Desulfovibrio vulgaris)).